The sequence spans 438 residues: Neutral metalloprotease ShpI (438 aa).

An N-terminal signal peptide occupies residues Met1 to Ala26. Residues Asp27 to Lys101 constitute a propeptide that is removed on maturation. His242 provides a ligand contact to Zn(2+). Glu243 is a catalytic residue. Residues His246 and Glu269 each coordinate Zn(2+).

Belongs to the peptidase M30 family. Zn(2+) serves as cofactor. Post-translationally, several different N-terminal ends may be produced, the favored N-terminus is position 102.

It localises to the secreted. Its activity is regulated as follows. Inhibited by metal- and zinc-specific inhibitors, such as EDTA and 1,10-phenanthroline in vitro. Is resistant to all inhibitors of serine, cysteine and aspartic proteases. In terms of biological role, protease that has a low substrate specificity. Catalyzes the hydrolysis of glucagon, melittin and oxidized beta-insulin at various positions in vitro. Is not able to cleave elastin or the synthetic substrates FAGLA (a substrate for neutral proteinases) and FALGPA (a substrate for collagenase). This Staphylococcus hyicus protein is Neutral metalloprotease ShpI.